A 1025-amino-acid chain; its full sequence is Multidrug resistance protein MdtC (1025 aa).

The next 12 membrane-spanning stretches (helical) occupy residues Phe3 to Leu23, Glu333 to Leu353, Ile360 to Cys380, Leu387 to Leu407, Val431 to Leu451, Phe463 to Pro483, Leu528 to Pro548, Val853 to Ser873, Val875 to Leu895, Leu897 to Val917, Pro953 to Gly973, and Ile984 to Val1004.

Belongs to the resistance-nodulation-cell division (RND) (TC 2.A.6) family. MdtC subfamily. As to quaternary structure, part of a tripartite efflux system composed of MdtA, MdtB and MdtC. MdtC forms a heteromultimer with MdtB.

It is found in the cell inner membrane. Its function is as follows. The MdtABC tripartite complex confers resistance against novobiocin and deoxycholate. The polypeptide is Multidrug resistance protein MdtC (Escherichia fergusonii (strain ATCC 35469 / DSM 13698 / CCUG 18766 / IAM 14443 / JCM 21226 / LMG 7866 / NBRC 102419 / NCTC 12128 / CDC 0568-73)).